Reading from the N-terminus, the 1502-residue chain is MNDSTQILDESGDFSFLSLNENKSRSRSTSTCSINSVEIIDGGSCDSSGDDDKNNSYLDEEKKRILRKTYLYFNANNKKTQLNFIIDNQVLDWIFNQTKTKISKPICESLKNGVALCKIINLIKPNTIKKINLNSSIFSYRENLTNFTKGCESIGMTEDMSRFQELVFEDKESAVLQLLYSLMKFSEKILPNTISTSPPSQLNICKSPVLLKKAAAQSSSSSPTTSTSASTSTSTSPSSSNESIAKPILSALSSSSSTLFSAAPTPTSTNTVPYKFIGHSKSKLFGQQQQQQQQQQQQQQQQQQQQQQQQQQQQQQQQQQQQQQQQQQPPPQTSTCTTTQPTTTTTEEHKLAPPPPLIVPNTSSLPPPQPTTSSIIKKAAPAPLKKPSPANTSSNSLLNHLPPPPSSSSTASSAINTPISTPSTSKSNSFQKPNNNFQKPIQIAHVEPIIEENEIEDNTNNNNNNNNNNNNNNNNNNNNNNNNNNNNNNNNTNDNINNNNKNNNNNQNENEDEVKPVHSPPKVRPPLPSRVGRGQLLRSSSEEIQFDIENASVSEAPSPVMTMNEDYSIVTDANSLTNHYNGANEYTTTTTAATTNLPNESSSRSNSASSNGDQNNNNNNNNNNNNNNNNNNNNNNNNNNNNNNNNLQLPAKINSEPNNQYNTISTSSPSTTGTILESPNGSSIFSQPLNNNNNINNENNNSNNSNSLVTSSSPPLSLPAYSANGSPNCPQGKKQRSGTKLRSFFGVKSKPESKSVSNFYGVGNSINQPPSNSSPKQSPVPNNPPSVSQSFLNLSMNSKSSKKKKDNISPDINSNSNNNNNNNNNNNNNNNNNNNNNNNNNNNNNNNNNNNNNLEEDENPLTMSNQSANSLKSSGNHFEDDITNGNNNISQNQNQNQNQNQNQTQNQNQNQNQNHISHSNSISSGNLNNHVNQNNNVNEESVDSELMKALSKVEFLFKDRKVLKERINFTYPEKYLKFFVNMDELIQIDNSTTFLTESLLSKRPSQQLELCHQEERRFLSEIVTLQNVLNVVEENKNLITRTEEMQKMIDSLMKEKKELINEKNTLASMLAKTKQQQQQQSNDTVSQRKMVDDGIVYNYNHGKYEIKGGTTEKLIELLYNSEFIGSDYFETFLLTYRSFASPKRVMDVLTKTYNENYSVEGNATDDVEKRLELDQFNKQRKDTHLKICNFLKRWVEKHFYDFDQDLLQEFNTFIANCRVINHQDFLQKTLNKKLIPLSSSELKLVFSTPTPAPILPKTPITCFEDMDPAEIARQLTLIEFNLFKNIANKEFLSLSWQKQDKEKRSPNLLKMIYRFNEVSNWVTSTIVKETTNIKKRASYLKRFIKLAEELRKLNNFNGVFVIVSGLHSASVNRLKNTWAEISKQQQKQFEEFVALTSPQSSFASYRLELRQSTGASIPYLGVHLSDLTFVEEGNQDKLENGYTNFSKCRLIAEQIKAIQEFQQEPYNLREVEEMIPFITHKAVPESECFNLSLICEPRESVN.

In terms of domain architecture, Calponin-homology (CH) spans 84–187 (FIIDNQVLDW…LLYSLMKFSE (104 aa)). Disordered stretches follow at residues 216-242 (AQSS…SSNE), 325-436 (QQQQ…PNNN), 456-534 (EDNT…VGRG), and 589-935 (TTTA…NQNN). 4 stretches are compositionally biased toward low complexity: residues 218–242 (SSSS…SSNE), 325–345 (QQQQ…TTTT), 371–400 (TTSS…LLNH), and 407–421 (SSST…PIST). The stretch at 287–328 (QQQQQQQQQQQQQQQQQQQQQQQQQQQQQQQQQQQQQQQQQQ) forms a coiled coil. The segment covering 422–436 (PSTSKSNSFQKPNNN) has biased composition (polar residues). Residues 451 to 515 (EENEIEDNTN…NQNENEDEVK (65 aa)) are a coiled coil. Residues 458-508 (NTNNNNNNNNNNNNNNNNNNNNNNNNNNNNNNNNTNDNINNNNKNNNNNQN) show a composition bias toward low complexity. The segment covering 518 to 528 (HSPPKVRPPLP) has biased composition (pro residues). 5 stretches are compositionally biased toward low complexity: residues 589-646 (TTTA…NNNN), 663-675 (TIST…TGTI), 686-719 (SQPL…LSLP), 764-790 (NSIN…VSQS), and 813-853 (NSNS…NNNN). Residues 861–876 (LTMSNQSANSLKSSGN) show a composition bias toward polar residues. A compositionally biased stretch (low complexity) spans 883 to 935 (TNGNNNISQNQNQNQNQNQNQTQNQNQNQNQNHISHSNSISSGNLNNHVNQNN). Residues 1032–1076 (VEENKNLITRTEEMQKMIDSLMKEKKELINEKNTLASMLAKTKQQ) adopt a coiled-coil conformation. Residues 1102 to 1249 (GKYEIKGGTT…SELKLVFSTP (148 aa)) enclose the N-terminal Ras-GEF domain. In terms of domain architecture, Ras-GEF spans 1267–1498 (DPAEIARQLT…FNLSLICEPR (232 aa)).

Promotes the exchange of Ras-bound GDP by GTP. The sequence is that of Ras guanine nucleotide exchange factor P (gefP) from Dictyostelium discoideum (Social amoeba).